A 360-amino-acid polypeptide reads, in one-letter code: MAAAAAAGAGPEMVRGQVFDVGPRYTNLSYIGEGAYGMVCSAYDNVNKVRVAIKKISPFEHQTYCQRTLREIKILLRFRHENIIGINDIIRAPTIEQMKDVYIVQDLMETDLYKLLKTQHLSNDHICYFLYQILRGLKYIHSANVLHRDLKPSNLLLNTTCDLKICDFGLARVADPDHDHTGFLTEYVATRWYRAPEIMLNSKGYTKSIDIWSVGCILAEMLSNRPIFPGKHYLDQLNHILGILGSPSQEDLNCIINLKARNYLLSLPHKNKVPWNRLFPNADSKALDLLDKMLTFNPHKRIEVEQALAHPYLEQYYDPSDEPVAEAPFKFDMELDDLPKEKLKELIFEETARFQPGYRS.

Residue alanine 2 is modified to N-acetylalanine. The Protein kinase domain maps to 25 to 313; the sequence is YTNLSYIGEG…VEQALAHPYL (289 aa). A Phosphoserine; by SGK1 modification is found at serine 29. ATP contacts are provided by residues 31 to 39 and lysine 54; that span reads IGEGAYGMV. The active-site Proton acceptor is aspartate 149. Threonine 185 is modified (phosphothreonine; by MAP2K1 and MAP2K2). The short motif at 185-187 is the TXY element; it reads TEY. Tyrosine 187 carries the phosphotyrosine; by MAP2K1 and MAP2K2 modification. Threonine 190 is subject to Phosphothreonine; by autocatalysis. Serine 246, serine 248, and serine 284 each carry phosphoserine.

Belongs to the protein kinase superfamily. CMGC Ser/Thr protein kinase family. MAP kinase subfamily. As to quaternary structure, binds both upstream activators and downstream substrates in multimolecular complexes. Interacts with ADAM15, ARHGEF2, ARRB2, DAPK1 (via death domain), HSF4, IER3, IPO7, MKNK2, MORG1, NISCH, PEA15, SGK1, and isoform 1 of NEK2. Interacts (via phosphorylated form) with TPR (via C-terminal region and phosphorylated form); the interaction requires dimerization of MAPK1/ERK2 and increases following EGF stimulation. Interacts with MAP2K1. Interacts with DUSP6. Interacts (phosphorylated form) with CAV2 ('Tyr-19'-phosphorylated form); the interaction, promoted by insulin, leads to nuclear location and MAPK1 activation. MKNK2 isoform 1 binding prevents from dephosphorylation and inactivation. Interacts with DCC. The phosphorylated form interacts with PML. Interacts with STYX. Interacts with CDK2AP2. Interacts with CAVIN4. Interacts with DUSP7; the interaction enhances DUSP7 phosphatase activity. Interacts with GIT1; this interaction is necessary for MAPK1 localization to focal adhesions. Interacts with ZNF263. Interacts with phosphoglycerate kinase PGK1; the interaction is direct, occurs under hypoxic conditions, and promotes interaction between PGK1 and PIN1. The cofactor is Mg(2+). In terms of processing, dually phosphorylated on Thr-185 and Tyr-187, which activates the enzyme. Phosphorylated upon FLT3 and KIT signaling. Phosphorylation on Ser-29 by SGK1 results in its activation by enhancing its interaction with MAP2K1/MEK1 and MAP2K2/MEK2. Phosphorylation at Ser-246 and Ser-248 as well as autophosphorylation at Thr-190 promote nuclear localization. Ligand-activated ALK induces tyrosine phosphorylation. Dephosphorylated by PTPRJ at Tyr-187. Dephosphorylated by DUSP1 and DUSP2 at Thr-185 and Tyr-187. ISGylated. Post-translationally, ubiquitinated by TRIM15 via 'Lys-63'-linked ubiquitination; leading to activation. Deubiquitinated by CYLD.

It is found in the nucleus. Its subcellular location is the cytoplasm. The protein localises to the cytoskeleton. The protein resides in the microtubule organizing center. It localises to the centrosome. It is found in the spindle. Its subcellular location is the membrane. The protein localises to the caveola. The protein resides in the cell junction. It localises to the focal adhesion. It carries out the reaction L-seryl-[protein] + ATP = O-phospho-L-seryl-[protein] + ADP + H(+). It catalyses the reaction L-threonyl-[protein] + ATP = O-phospho-L-threonyl-[protein] + ADP + H(+). With respect to regulation, phosphorylated by MAP2K1/MEK1 and MAP2K2/MEK2 on Thr-185 and Tyr-187 in response to external stimuli like insulin or NGF. Both phosphorylations are required for activity. This phosphorylation causes dramatic conformational changes, which enable full activation and interaction of MAPK1/ERK2 with its substrates. Phosphorylation on Ser-29 by SGK1 results in its activation by enhancing its interaction with MAP2K1/MEK1 and MAP2K2/MEK2. Dephosphorylated and inactivated by DUSP1, DUSP3, DUSP6 and DUSP9. Inactivated by pyrimidylpyrrole inhibitors. Functionally, serine/threonine kinase which acts as an essential component of the MAP kinase signal transduction pathway. MAPK1/ERK2 and MAPK3/ERK1 are the 2 MAPKs which play an important role in the MAPK/ERK cascade. They participate also in a signaling cascade initiated by activated KIT and KITLG/SCF. Depending on the cellular context, the MAPK/ERK cascade mediates diverse biological functions such as cell growth, adhesion, survival and differentiation through the regulation of transcription, translation, cytoskeletal rearrangements. The MAPK/ERK cascade also plays a role in initiation and regulation of meiosis, mitosis, and postmitotic functions in differentiated cells by phosphorylating a number of transcription factors. About 160 substrates have already been discovered for ERKs. Many of these substrates are localized in the nucleus, and seem to participate in the regulation of transcription upon stimulation. However, other substrates are found in the cytosol as well as in other cellular organelles, and those are responsible for processes such as translation, mitosis and apoptosis. Moreover, the MAPK/ERK cascade is also involved in the regulation of the endosomal dynamics, including lysosome processing and endosome cycling through the perinuclear recycling compartment (PNRC); as well as in the fragmentation of the Golgi apparatus during mitosis. The substrates include transcription factors (such as ATF2, BCL6, ELK1, ERF, FOS, HSF4 or SPZ1), cytoskeletal elements (such as CANX, CTTN, GJA1, MAP2, MAPT, PXN, SORBS3 or STMN1), regulators of apoptosis (such as BAD, BTG2, CASP9, DAPK1, IER3, MCL1 or PPARG), regulators of translation (such as EIF4EBP1 and FXR1) and a variety of other signaling-related molecules (like ARHGEF2, DCC, FRS2 or GRB10). Protein kinases (such as RAF1, RPS6KA1/RSK1, RPS6KA3/RSK2, RPS6KA2/RSK3, RPS6KA6/RSK4, SYK, MKNK1/MNK1, MKNK2/MNK2, RPS6KA5/MSK1, RPS6KA4/MSK2, MAPKAPK3 or MAPKAPK5) and phosphatases (such as DUSP1, DUSP4, DUSP6 or DUSP16) are other substrates which enable the propagation the MAPK/ERK signal to additional cytosolic and nuclear targets, thereby extending the specificity of the cascade. Mediates phosphorylation of TPR in response to EGF stimulation. May play a role in the spindle assembly checkpoint. Phosphorylates PML and promotes its interaction with PIN1, leading to PML degradation. Phosphorylates CDK2AP2. Phosphorylates phosphoglycerate kinase PGK1 under hypoxic conditions to promote its targeting to the mitochondrion and suppress the formation of acetyl-coenzyme A from pyruvate. Its function is as follows. Acts as a transcriptional repressor. Binds to a [GC]AAA[GC] consensus sequence. Repress the expression of interferon gamma-induced genes. Seems to bind to the promoter of CCL5, DMP1, IFIH1, IFITM1, IRF7, IRF9, LAMP3, OAS1, OAS2, OAS3 and STAT1. Transcriptional activity is independent of kinase activity. This Bos taurus (Bovine) protein is Mitogen-activated protein kinase 1.